The primary structure comprises 138 residues: Large ribosomal subunit protein uL14 (138 aa).

The protein belongs to the universal ribosomal protein uL14 family. Part of the 50S ribosomal subunit. Forms a cluster with proteins L3 and L24e, part of which may contact the 16S rRNA in 2 intersubunit bridges.

Its function is as follows. Binds to 23S rRNA. Forms part of two intersubunit bridges in the 70S ribosome. The chain is Large ribosomal subunit protein uL14 from Sulfurisphaera tokodaii (strain DSM 16993 / JCM 10545 / NBRC 100140 / 7) (Sulfolobus tokodaii).